The chain runs to 208 residues: NADH-quinone oxidoreductase subunit I 2 (208 aa).

2 consecutive 4Fe-4S ferredoxin-type domains span residues 79-109 (ILVE…IEGK) and 119-148 (SVFN…QTDI). The [4Fe-4S] cluster site is built by C88, C91, C94, C98, C128, C131, C134, and C138.

The protein belongs to the complex I 23 kDa subunit family. NDH-1 is composed of 14 different subunits. Subunits NuoA, H, J, K, L, M, N constitute the membrane sector of the complex. [4Fe-4S] cluster serves as cofactor.

It localises to the cell inner membrane. It catalyses the reaction a quinone + NADH + 5 H(+)(in) = a quinol + NAD(+) + 4 H(+)(out). In terms of biological role, NDH-1 shuttles electrons from NADH, via FMN and iron-sulfur (Fe-S) centers, to quinones in the respiratory chain. The immediate electron acceptor for the enzyme in this species is believed to be ubiquinone. Couples the redox reaction to proton translocation (for every two electrons transferred, four hydrogen ions are translocated across the cytoplasmic membrane), and thus conserves the redox energy in a proton gradient. This chain is NADH-quinone oxidoreductase subunit I 2, found in Aquifex aeolicus (strain VF5).